An 801-amino-acid chain; its full sequence is U-box domain-containing protein 44 (801 aa).

One can recognise a U-box domain in the interval 22 to 101; the sequence is HIYEAFICPL…EEWRSRNDAA (80 aa). 9 ARM repeats span residues 134–173, 176–215, 218–259, 261–300, 301–340, 342–386, 390–429, 435–475, and 480–521; these read RSNRHGVRNSQLIHMIIDMLKSTSHRVRYKALQTLQVVVE, DESKAIVAEGDTVRTLVKFLSHEPSKGREAAVSLLFELSK, ALCE…NMER, EEIVRQMASYGRLQPLLGKLLEGSPETKLSMASFLGELPL, NNDVKVLVAQTVGSSLVDLMRSGDMPQREAALKALNKISS, EGSA…NIVN, DFDKATLVSENRVENLLHLISNTGPAIQCKLLEVLVGLTS, PKVV…NLSP, and ELAK…ELPD.

Interacts with AAO3. Binds to SD129. Expressed in leaves, root vasculature and guard cells.

It carries out the reaction S-ubiquitinyl-[E2 ubiquitin-conjugating enzyme]-L-cysteine + [acceptor protein]-L-lysine = [E2 ubiquitin-conjugating enzyme]-L-cysteine + N(6)-ubiquitinyl-[acceptor protein]-L-lysine.. The protein operates within protein modification; protein ubiquitination. Functionally, functions as an E3 ubiquitin-protein ligase. Prevents premature senescence probably by targeting proteins involved in this process for degradation. Promotes the degradation of AAO3 and thus represses abscisic acid (ABA) biosynthesis. In Arabidopsis thaliana (Mouse-ear cress), this protein is U-box domain-containing protein 44 (PUB44).